The sequence spans 189 residues: Ras-like protein 1 (189 aa).

A GTP-binding site is contributed by 10–17; sequence GGGGVGKS. The Effector region motif lies at 32-40; that stretch reads YDPTIEDSY. GTP is bound by residues 57 to 61 and 116 to 119; these read DTAGQ and NKCD. Cys-186 is modified (cysteine methyl ester). Cys-186 carries S-geranylgeranyl cysteine lipidation. The propeptide at 187 to 189 is removed in mature form; it reads LLL.

Belongs to the small GTPase superfamily. Ras family.

It localises to the cell membrane. It catalyses the reaction GTP + H2O = GDP + phosphate + H(+). Functionally, ras proteins bind GDP/GTP and possess intrinsic GTPase activity. The sequence is that of Ras-like protein 1 (RAS1) from Physarum polycephalum (Slime mold).